A 426-amino-acid chain; its full sequence is Serine--tRNA ligase (426 aa).

233-235 is an L-serine binding site; the sequence is TAE. 264 to 266 provides a ligand contact to ATP; that stretch reads RSE. Glu287 contributes to the L-serine binding site. Position 351 to 354 (351 to 354) interacts with ATP; it reads EISS. Ser387 lines the L-serine pocket.

The protein belongs to the class-II aminoacyl-tRNA synthetase family. Type-1 seryl-tRNA synthetase subfamily. As to quaternary structure, homodimer. The tRNA molecule binds across the dimer.

The protein localises to the cytoplasm. It carries out the reaction tRNA(Ser) + L-serine + ATP = L-seryl-tRNA(Ser) + AMP + diphosphate + H(+). The catalysed reaction is tRNA(Sec) + L-serine + ATP = L-seryl-tRNA(Sec) + AMP + diphosphate + H(+). It functions in the pathway aminoacyl-tRNA biosynthesis; selenocysteinyl-tRNA(Sec) biosynthesis; L-seryl-tRNA(Sec) from L-serine and tRNA(Sec): step 1/1. In terms of biological role, catalyzes the attachment of serine to tRNA(Ser). Is also able to aminoacylate tRNA(Sec) with serine, to form the misacylated tRNA L-seryl-tRNA(Sec), which will be further converted into selenocysteinyl-tRNA(Sec). This chain is Serine--tRNA ligase, found in Clostridium botulinum (strain Kyoto / Type A2).